A 333-amino-acid polypeptide reads, in one-letter code: Type II restriction enzyme XcyI (333 aa).

The protein belongs to the XcyI type II restriction endonuclease family. As to quaternary structure, monomer. Mg(2+) is required as a cofactor.

It carries out the reaction Endonucleolytic cleavage of DNA to give specific double-stranded fragments with terminal 5'-phosphates.. Its function is as follows. A P subtype restriction enzyme that recognizes the double-stranded sequence 5'-CCCGGG-3' and cleaves after C-1. The protein is Type II restriction enzyme XcyI (xcyIR) of Xanthomonas campestris pv. cyanopsidis.